Here is a 121-residue protein sequence, read N- to C-terminus: Large ribosomal subunit protein bL19 (121 aa).

It belongs to the bacterial ribosomal protein bL19 family.

Functionally, this protein is located at the 30S-50S ribosomal subunit interface and may play a role in the structure and function of the aminoacyl-tRNA binding site. This Chlamydia muridarum (strain MoPn / Nigg) protein is Large ribosomal subunit protein bL19 (rplS).